A 694-amino-acid polypeptide reads, in one-letter code: Acetolactate synthase catalytic subunit, mitochondrial (694 aa).

A mitochondrion-targeting transit peptide spans 1–42 (MLRSRQATNALRAVGQTRPLRSQTAVAFTQSLNKVPSNRRSE). A compositionally biased stretch (low complexity) spans 45-58 (VATASSTASGAFNS). The interval 45–69 (VATASSTASGAFNSQVRPTPSPTFN) is disordered. Over residues 59-69 (QVRPTPSPTFN) the composition is skewed to polar residues. Glu-140 serves as a coordination point for thiamine diphosphate. FAD contacts are provided by residues Arg-242, 358–379 (HGSA…LGGR), and 410–429 (EIMP…IVGD). Residues 505–585 (QHQMWTAQHF…VKVIVLNNEE (81 aa)) are thiamine pyrophosphate binding. Mg(2+) contacts are provided by Asp-556, Asn-583, and Glu-585.

It belongs to the TPP enzyme family. Homodimer. Requires Mg(2+) as cofactor. Thiamine diphosphate is required as a cofactor.

It localises to the mitochondrion. It carries out the reaction 2 pyruvate + H(+) = (2S)-2-acetolactate + CO2. The enzyme catalyses 2-oxobutanoate + pyruvate + H(+) = (S)-2-ethyl-2-hydroxy-3-oxobutanoate + CO2. Its pathway is amino-acid biosynthesis; L-isoleucine biosynthesis; L-isoleucine from 2-oxobutanoate: step 1/4. It functions in the pathway amino-acid biosynthesis; L-valine biosynthesis; L-valine from pyruvate: step 1/4. Acetolactate synthase catalytic subunit, mitochondrial; part of the gene cluster that mediates the biosynthesis of chlorflavonin, a fungal flavonoid with acetolactate synthase inhibitory activity. Is not direcly involved in chlorflavonin biosynthesis but acts as a self-resistant protein that effectively confers chlorflavonin resistance to the native host. As a catalytic subunit of mitochondrial acetolactate synthase, catalyzes the first of a series of common steps in the biosynthesis of the branched-chain amino acids. Catalyzes the irreversible decarboxylation of pyruvate to a bound hydroxyethyl group that then condenses with either a second pyruvate molecule to form 2-acetolactate (AL) or with 2-ketobutyrate to form 2-aceto-2-hydroxybutyrate (AHB). The first product is the precursor for valine and leucine biosynthesis, while the second leads to isoleucine. The sequence is that of Acetolactate synthase catalytic subunit, mitochondrial from Aspergillus candidus.